The primary structure comprises 842 residues: Translation initiation factor IF-2 (842 aa).

Residues 121–144 (TESTSVEKSESDDVTLEEESSKKV) are disordered. The tr-type G domain maps to 340–510 (PRAPVVTVMG…LLMAELLELK (171 aa)). The interval 349–356 (GHVDHGKT) is G1. 349–356 (GHVDHGKT) is a binding site for GTP. The tract at residues 374–378 (GITQH) is G2. The G3 stretch occupies residues 396–399 (DTPG). Residues 396–400 (DTPGH) and 450–453 (NKID) contribute to the GTP site. The G4 stretch occupies residues 450 to 453 (NKID). Positions 486 to 488 (SAK) are G5.

This sequence belongs to the TRAFAC class translation factor GTPase superfamily. Classic translation factor GTPase family. IF-2 subfamily.

It is found in the cytoplasm. Functionally, one of the essential components for the initiation of protein synthesis. Protects formylmethionyl-tRNA from spontaneous hydrolysis and promotes its binding to the 30S ribosomal subunits. Also involved in the hydrolysis of GTP during the formation of the 70S ribosomal complex. This chain is Translation initiation factor IF-2, found in Ehrlichia chaffeensis (strain ATCC CRL-10679 / Arkansas).